Consider the following 79-residue polypeptide: Morintide mO1 (79 aa).

The signal sequence occupies residues methionine 1–alanine 20. The 43-residue stretch at glutamine 21–glycine 63 folds into the Chitin-binding type-1 domain. 4 disulfide bridges follow: cysteine 23–cysteine 38, cysteine 32–cysteine 44, cysteine 37–cysteine 51, and cysteine 57–cysteine 61. Residues glycine 64–proline 79 constitute a propeptide that is removed on maturation.

Leaves (at protein level).

Chitin-binding protein which functions in defense against chitin-containing fungal pathogens. Inhibits the growth of budding hyphae in A.alternata and A.brassiciola. The protein is Morintide mO1 of Moringa oleifera (Horseradish tree).